An 889-amino-acid polypeptide reads, in one-letter code: A disintegrin and metalloproteinase with thrombospondin motifs 8 (889 aa).

The N-terminal stretch at 1 to 26 (MLPAPAAPRWPPLLLLLLLLLPLARG) is a signal peptide. A propeptide spanning residues 27–213 (APARPAAGGQ…PLGATSRTKR (187 aa)) is cleaved from the precursor. Residues 138-210 (QGAGGSLAQP…PPPPLGATSR (73 aa)) are disordered. Residues 173–183 (EGQRQERGDHQ) show a composition bias toward basic and acidic residues. Acidic residues predominate over residues 184–197 (EDSEEESQEEEAEG). Residues 219-429 (RFVETLLVAD…GHGDCLLDAP (211 aa)) enclose the Peptidase M12B domain. 11 cysteine pairs are disulfide-bonded: C294–C347, C323–C329, C341–C424, C379–C408, C452–C477, C463–C486, C472–C507, C501–C512, C538–C575, C542–C580, and C553–C565. N-linked (GlcNAc...) asparagine glycosylation is present at N344. H363 contacts Zn(2+). Residue E364 is part of the active site. Residues H367 and H373 each contribute to the Zn(2+) site. N400, N465, and N490 each carry an N-linked (GlcNAc...) asparagine glycan. The Disintegrin domain maps to 438–525 (GLPGRMALYQ…EEVERPKPVA (88 aa)). One can recognise a TSP type-1 1 domain in the interval 526-581 (DGGWAPWGPWGECSRTCGGGVQFSHRECKDPEPQNGGRYCLGRRAKYQSCHTEECP). The N-linked (GlcNAc...) asparagine glycan is linked to N599. A spacer region spans residues 690 to 831 (RKVSGSLTPT…RATTNIIQPL (142 aa)). In terms of domain architecture, TSP type-1 2 spans 833-888 (HAQWVLGDWSECSSTCGAGWQRRTVECRDPSGQASATCNKALKPEDAKPCESQLCP).

It depends on Zn(2+) as a cofactor. The precursor is cleaved by a furin endopeptidase. In terms of processing, glycosylated. Can be O-fucosylated by POFUT2 on a serine or a threonine residue found within the consensus sequence C1-X(2)-(S/T)-C2-G of the TSP type-1 repeat domains where C1 and C2 are the first and second cysteine residue of the repeat, respectively. Fucosylated repeats can then be further glycosylated by the addition of a beta-1,3-glucose residue by the glucosyltransferase, B3GALTL. Fucosylation mediates the efficient secretion of ADAMTS family members. Can also be C-glycosylated with one or two mannose molecules on tryptophan residues within the consensus sequence W-X-X-W of the TPRs, and N-glycosylated. These other glycosylations can also facilitate secretion. Highly expressed in adult and fetal lung, lower expression in brain, placenta, heart, stomach and fetal brain and kidney.

The protein resides in the secreted. The protein localises to the extracellular space. Its subcellular location is the extracellular matrix. Functionally, has anti-angiogenic properties. In Homo sapiens (Human), this protein is A disintegrin and metalloproteinase with thrombospondin motifs 8 (ADAMTS8).